Here is a 404-residue protein sequence, read N- to C-terminus: Glucose-1-phosphate adenylyltransferase (404 aa).

Alpha-D-glucose 1-phosphate-binding positions include Tyr-99, Gly-164, 179–180 (EK), and Ser-197.

This sequence belongs to the bacterial/plant glucose-1-phosphate adenylyltransferase family.

It catalyses the reaction alpha-D-glucose 1-phosphate + ATP + H(+) = ADP-alpha-D-glucose + diphosphate. It functions in the pathway glycan biosynthesis; glycogen biosynthesis. In terms of biological role, involved in the biosynthesis of ADP-glucose, a building block, required in the biosynthesis of maltose-1-phosphate (M1P) and in the elongation reactions to produce linear alpha-1,4-glucans. Catalyzes the reaction between ATP and alpha-D-glucose 1-phosphate (G1P) to produce pyrophosphate and ADP-Glc. In Mycolicibacterium gilvum (strain PYR-GCK) (Mycobacterium gilvum (strain PYR-GCK)), this protein is Glucose-1-phosphate adenylyltransferase.